The primary structure comprises 211 residues: Scoloptoxin SSD43 (211 aa).

A signal peptide spans 1-20; that stretch reads MNFVIYGVIVVLTSQLYVDG.

Contains 3 disulfide bonds. As to expression, expressed by the venom gland.

The protein localises to the secreted. Its function is as follows. Shows trypsin inhibiting activity. The protein is highly thermally stable, since its incubation in boiling water during 10 minutes does not reduce its activity. The sequence is that of Scoloptoxin SSD43 from Scolopendra dehaani (Thai centipede).